The sequence spans 104 residues: Small ribosomal subunit protein uS10 (104 aa).

It belongs to the universal ribosomal protein uS10 family. As to quaternary structure, part of the 30S ribosomal subunit.

In terms of biological role, involved in the binding of tRNA to the ribosomes. In Thermosynechococcus vestitus (strain NIES-2133 / IAM M-273 / BP-1), this protein is Small ribosomal subunit protein uS10.